A 297-amino-acid chain; its full sequence is Homeobox protein HMX3 (297 aa).

Disordered stretches follow at residues 24–43 and 96–172; these read NSDS…KAGL and AAQK…RKKK. Basic and acidic residues-rich tracts occupy residues 109–123 and 145–166; these read TDRD…SDPD and EDGK…ADKK. A DNA-binding region (homeobox) is located at residues 170 to 229; the sequence is KKKTRTVFSRSQVFQLESTFDMKRYLSSSERAGLAASLHLTETQVKIWFQNRRNKWKRQL.

It belongs to the HMX homeobox family. Expressed in the ear placode and vesicle and in cells forming the vestibulo-acoustic ganglion. Also expressed in the lateral line.

The protein resides in the nucleus. Transcription factor involved in specification of neuronal cell types and which is required for inner ear and hypothalamus development. Binds to the 5'-CAAGTG-3' core sequence. The protein is Homeobox protein HMX3 (hmx3) of Danio rerio (Zebrafish).